A 501-amino-acid chain; its full sequence is HMG-box protein STE11 (501 aa).

Residues 142 to 153 (PVNMVGSLSGSP) are compositionally biased toward polar residues. Disordered regions lie at residues 142–205 (PVNM…KRPL) and 246–293 (YAEM…SLEQ). Residues 192-204 (SRSGSSSSGIKRP) are compositionally biased toward low complexity. The segment at residues 201 to 265 (IKRPLNSFML…RHAKEYPDYK (65 aa)) is a DNA-binding region (HMG box). A compositionally biased stretch (basic and acidic residues) spans 246 to 263 (YAEMAQRERERHAKEYPD).

In terms of processing, phosphorylated by MAPK2.

It localises to the nucleus. This Pneumocystis carinii protein is HMG-box protein STE11.